The following is a 180-amino-acid chain: MKILGIDPGLRTTGFGVIEKHGNKLTYIASGTIKTPDADLPQRLKTILSSVSEVIATYHPDCAAIEKVFVNVNPQSTLLLGQARGAAICALVHADLLVAEYTALQVKQAVVGQGKAQKAQVQDMVQRLLKLSGLPGTDAADALGVAICHAHSGEALSVLGALAPELARKGLRVRGGRLVG.

Catalysis depends on residues Asp-7, Glu-66, and Asp-138. Residues Asp-7, Glu-66, and Asp-138 each coordinate Mg(2+).

The protein belongs to the RuvC family. Homodimer which binds Holliday junction (HJ) DNA. The HJ becomes 2-fold symmetrical on binding to RuvC with unstacked arms; it has a different conformation from HJ DNA in complex with RuvA. In the full resolvosome a probable DNA-RuvA(4)-RuvB(12)-RuvC(2) complex forms which resolves the HJ. The cofactor is Mg(2+).

It is found in the cytoplasm. It carries out the reaction Endonucleolytic cleavage at a junction such as a reciprocal single-stranded crossover between two homologous DNA duplexes (Holliday junction).. Functionally, the RuvA-RuvB-RuvC complex processes Holliday junction (HJ) DNA during genetic recombination and DNA repair. Endonuclease that resolves HJ intermediates. Cleaves cruciform DNA by making single-stranded nicks across the HJ at symmetrical positions within the homologous arms, yielding a 5'-phosphate and a 3'-hydroxyl group; requires a central core of homology in the junction. The consensus cleavage sequence is 5'-(A/T)TT(C/G)-3'. Cleavage occurs on the 3'-side of the TT dinucleotide at the point of strand exchange. HJ branch migration catalyzed by RuvA-RuvB allows RuvC to scan DNA until it finds its consensus sequence, where it cleaves and resolves the cruciform DNA. The protein is Crossover junction endodeoxyribonuclease RuvC of Janthinobacterium sp. (strain Marseille) (Minibacterium massiliensis).